Consider the following 216-residue polypeptide: MTACVLIVDAGLGNIGSVVAAYDRLGVRNFRIRKPPSDIACYTHLILPGVGSFSAGMDSLNSLGWSDWLKDVWLPTGRPLLGICLGMQLLASRGFEGSDSGNSIPGLDLISGKIVLMSPSQNLALPHVGWNSVYWSNTITPLSVDINSGCDFYFVHSYTFRCDDDSNCLATSNYGSQFSAVVSDISRNVWGMQFHPEKSQKLGKCLLQNFIALNPC.

The 213-residue stretch at 4-216 (CVLIVDAGLG…LQNFIALNPC (213 aa)) folds into the Glutamine amidotransferase type-1 domain. Residue C84 is the Nucleophile of the active site. Residues H195 and E197 contribute to the active site.

Heterodimer of HisH and HisF.

Its subcellular location is the cytoplasm. It catalyses the reaction 5-[(5-phospho-1-deoxy-D-ribulos-1-ylimino)methylamino]-1-(5-phospho-beta-D-ribosyl)imidazole-4-carboxamide + L-glutamine = D-erythro-1-(imidazol-4-yl)glycerol 3-phosphate + 5-amino-1-(5-phospho-beta-D-ribosyl)imidazole-4-carboxamide + L-glutamate + H(+). The catalysed reaction is L-glutamine + H2O = L-glutamate + NH4(+). The protein operates within amino-acid biosynthesis; L-histidine biosynthesis; L-histidine from 5-phospho-alpha-D-ribose 1-diphosphate: step 5/9. IGPS catalyzes the conversion of PRFAR and glutamine to IGP, AICAR and glutamate. The HisH subunit provides the glutamine amidotransferase activity that produces the ammonia necessary to HisF for the synthesis of IGP and AICAR. The polypeptide is Imidazole glycerol phosphate synthase subunit HisH 1 (hisH1) (Prochlorococcus marinus (strain MIT 9313)).